A 399-amino-acid polypeptide reads, in one-letter code: MKILVINCGSSSLKYQLLDMDTQTPIAKGLVERIGLPGAVLTHRPADGEKEIITAEIPNHTVAIQLVLDALVNPEYGVVKSLEEIGSVGHRVVHGGEKFASSVLITDEVMQAIEECIELAPLHNPPNIAGIEACQKLMPGVPQVAVFDTAFHQTMPPHAYLYGLPYEFYEKYKIRKYGFHGTSHKYVSQRAAKLLNRPAEGLKLISCHLGNGSSITAIKDGKSIETSMGFTPLEGLMMGTRSGDLDPAIVSFIQQKENLSSDEVNDFLNKKCGVLGLSGVSSDFRDIEQARDQGNYRAALALDVFSHDVKKYIGSYAAVLNGADAIIFTAGLGENSAEMREAVVDGLQYLGAKLDLEKNKVRGKEADISAPEATCRVLVIPTNEELMIALDTLDIIQKG.

Position 7 (Asn-7) interacts with Mg(2+). Lys-14 contributes to the ATP binding site. Residue Arg-91 participates in substrate binding. The active-site Proton donor/acceptor is Asp-148. ATP contacts are provided by residues His-208 to Gly-212, Asp-283 to Arg-285, and Gly-331 to Asn-335. Mg(2+) is bound at residue Glu-384.

Belongs to the acetokinase family. Homodimer. Requires Mg(2+) as cofactor. The cofactor is Mn(2+).

It localises to the cytoplasm. It catalyses the reaction acetate + ATP = acetyl phosphate + ADP. It functions in the pathway metabolic intermediate biosynthesis; acetyl-CoA biosynthesis; acetyl-CoA from acetate: step 1/2. Catalyzes the formation of acetyl phosphate from acetate and ATP. Can also catalyze the reverse reaction. The chain is Acetate kinase from Desulfitobacterium hafniense (strain DSM 10664 / DCB-2).